A 146-amino-acid polypeptide reads, in one-letter code: UPF0735 ACT domain-containing protein Cphy_3604 (146 aa).

The ACT domain maps to 70–145 (TFMLQMDDIP…GIHYLKILGR (76 aa)).

This sequence belongs to the UPF0735 family.

This is UPF0735 ACT domain-containing protein Cphy_3604 from Lachnoclostridium phytofermentans (strain ATCC 700394 / DSM 18823 / ISDg) (Clostridium phytofermentans).